The primary structure comprises 1006 residues: MAEQESLEFGKADFVLMDTVSMPEFMANLRLRFEKGRIYTFIGEVVVSVNPYKLLNIYGRDTIEQYKGRELYERPPHLFAIADAAYKAMKRRSKDTCIVISGESGAGKTEASKYIMQYIAAITNPSQRAEVERVKNMLLKSNCVLEAFGNAKTNRNDNSSRFGKYMDINFDFKGDPIGGHINNYLLEKSRVIVQQPGERSFHSFYQLLQGGSEQMLRSLHLQKSLSSYNYIHVGAQLKSSINDAAEFRVVADAMKVIGFKPEEIQTVYKILAAILHLGNLKFVVDGDTPLIENGKVVSIIAELLSTKTDMVEKALLYRTVATGRDIIDKQHTEQEASYGRDAFAKAIYERLFCWIVTRINDIIEVKNYDTTIHGKNTVIGVLDIYGFEIFDNNSFEQFCINYCNEKLQQLFIQLVLKQEQEEYQREGIPWKHIDYFNNQIIVDLVEQQHKGIIAILDDACMNVGKVTDEMFLEALNSKLGKHAHFSSRKLCASDKILEFDRDFRIRHYAGDVVYSVIGFIDKNKDTLFQDFKRLMYNSSNPVLKNMWPEGKLSITEVTKRPLTAATLFKNSMIALVDNLASKEPYYVRCIKPNDKKSPQIFDDERCRHQVEYLGLLENVRVRRAGFAFRQTYEKFLHRYKMISEFTWPNHDLPSDKEAVKKLIERCGFQDDVAYGKTKIFIRTPRTLFTLEELRAQMLIRIVLFLQKVWRGTLARMRYKRTKAALTIIRYYRRYKVKSYIHEVARRFHGVKTMRDYGKHVKWPSPPKVLRRFEEALQTIFNRWRASQLIKSIPASDLPQVRAKVAAVEMLKGQRADLGLQRAWEGNYLASKPDTPQTSGTFVPVANELKRKDKYMNVLFSCHVRKVNRFSKVEDRAIFVTDRHLYKMDPTKQYKVMKTIPLYNLTGLSVSNGKDQLVVFHTKDNKDLIVCLFSKQPTHESRIGELVGVLVNHFKSEKRHLQVNVTNPVQCSLHGKKCTVSVETRLNQPQPDFTKNRSGFILSVPGN.

The residue at position 2 (Ala2) is an N-acetylalanine. The 687-residue stretch at 9–695 (FGKADFVLMD…TLFTLEELRA (687 aa)) folds into the Myosin motor domain. 102–109 (GESGAGKT) is an ATP binding site. Residue Ser200 is modified to Phosphoserine. Phosphotyrosine is present on Tyr536. Residues 572–594 (MIALVDNLASKEPYYVRCIKPND) are actin-binding. 2 IQ domains span residues 699–719 (IRIV…MRYK) and 721–741 (TKAA…SYIH). The TH1 domain occupies 812–1005 (GQRADLGLQR…RSGFILSVPG (194 aa)).

The protein belongs to the TRAFAC class myosin-kinesin ATPase superfamily. Myosin family. As to quaternary structure, interacts (via the two IQ motifs) with calmodulin. Binds an additional calmodulin chain via a third, C-terminal region. Interacts with F-actin. Expressed in many tissues. Highest levels in brain, followed by lung and ovary; expression is lowest in spleen.

The protein resides in the cytoplasm. The protein localises to the perikaryon. It is found in the cell projection. Its subcellular location is the dendrite. It localises to the early endosome. The protein resides in the cell cortex. Functionally, unconventional myosin that functions as actin-based motor protein with ATPase activity. Plays a role in endosomal protein trafficking, and especially in the transfer of cargo proteins from early to recycling endosomes. Required for normal planar cell polarity in ciliated tracheal cells, for normal rotational polarity of cilia, and for coordinated, unidirectional ciliary movement in the trachea. Required for normal, polarized cilia organization in brain ependymal epithelial cells. The sequence is that of Unconventional myosin-Id (MYO1D) from Homo sapiens (Human).